We begin with the raw amino-acid sequence, 206 residues long: Ribosomal RNA small subunit methyltransferase G (206 aa).

S-adenosyl-L-methionine contacts are provided by residues glycine 73, leucine 78, 124–125, and arginine 139; that span reads VE.

Belongs to the methyltransferase superfamily. RNA methyltransferase RsmG family.

Its subcellular location is the cytoplasm. It catalyses the reaction guanosine(527) in 16S rRNA + S-adenosyl-L-methionine = N(7)-methylguanosine(527) in 16S rRNA + S-adenosyl-L-homocysteine. Specifically methylates the N7 position of guanine in position 527 of 16S rRNA. This is Ribosomal RNA small subunit methyltransferase G from Pectobacterium carotovorum subsp. carotovorum (strain PC1).